A 151-amino-acid chain; its full sequence is Putative phosphatidylglycerol/phosphatidylinositol transfer protein 1 (151 aa).

The first 26 residues, 1–26 (MKHSKNQIVYITFFIIILIVVKPIES), serve as a signal peptide directing secretion.

It belongs to the NPC2 family. Monomer.

In terms of biological role, catalyzes the intermembrane transfer of phosphatidylglycerol and phosphatidylinositol. In Dictyostelium discoideum (Social amoeba), this protein is Putative phosphatidylglycerol/phosphatidylinositol transfer protein 1.